Consider the following 533-residue polypeptide: Glycogen synthase (533 aa).

ADP-alpha-D-glucose is bound at residue K12. Residues 497–533 (AALARADAASGRRRRAPEQSERLRQERLARQVALASK) are disordered. The segment covering 512–525 (APEQSERLRQERLA) has biased composition (basic and acidic residues).

Belongs to the glycosyltransferase 1 family. Bacterial/plant glycogen synthase subfamily.

It carries out the reaction [(1-&gt;4)-alpha-D-glucosyl](n) + ADP-alpha-D-glucose = [(1-&gt;4)-alpha-D-glucosyl](n+1) + ADP + H(+). It participates in glycan biosynthesis; glycogen biosynthesis. Functionally, synthesizes alpha-1,4-glucan chains using ADP-glucose. This Burkholderia thailandensis (strain ATCC 700388 / DSM 13276 / CCUG 48851 / CIP 106301 / E264) protein is Glycogen synthase.